The following is a 344-amino-acid chain: Phenylalanine--tRNA ligase alpha subunit (344 aa).

Glu256 lines the Mg(2+) pocket.

The protein belongs to the class-II aminoacyl-tRNA synthetase family. Phe-tRNA synthetase alpha subunit type 1 subfamily. Tetramer of two alpha and two beta subunits. The cofactor is Mg(2+).

The protein resides in the cytoplasm. The catalysed reaction is tRNA(Phe) + L-phenylalanine + ATP = L-phenylalanyl-tRNA(Phe) + AMP + diphosphate + H(+). The sequence is that of Phenylalanine--tRNA ligase alpha subunit from Shouchella clausii (strain KSM-K16) (Alkalihalobacillus clausii).